The sequence spans 510 residues: Cytochrome P450 94B1 (510 aa).

A helical membrane pass occupies residues 3–23; sequence MLNAIILILFPIIGFVLIFSF. Position 450 (cysteine 450) interacts with heme.

This sequence belongs to the cytochrome P450 family. It depends on heme as a cofactor.

The protein localises to the membrane. It carries out the reaction a jasmonyl-L-amino acid + reduced [NADPH--hemoprotein reductase] + O2 = a 12-hydroxyjasmonyl-L-alpha-amino acid + oxidized [NADPH--hemoprotein reductase] + H2O + H(+). Hydroxylase involved in the oxidation of the plant hormone jasmonoyl-L-isoleucine (JA-Ile), a bioactive phytohormone of the jasmonate-mediated signaling pathway. Converts JA-Ile to 12-hydroxy-JA-Ile. The sequence is that of Cytochrome P450 94B1 from Arabidopsis thaliana (Mouse-ear cress).